Consider the following 298-residue polypeptide: Ribosomal protein L11 methyltransferase (298 aa).

S-adenosyl-L-methionine is bound by residues Thr152, Gly173, Asp195, and Asn234.

Belongs to the methyltransferase superfamily. PrmA family.

The protein resides in the cytoplasm. It catalyses the reaction L-lysyl-[protein] + 3 S-adenosyl-L-methionine = N(6),N(6),N(6)-trimethyl-L-lysyl-[protein] + 3 S-adenosyl-L-homocysteine + 3 H(+). In terms of biological role, methylates ribosomal protein L11. The protein is Ribosomal protein L11 methyltransferase of Ralstonia pickettii (strain 12J).